The sequence spans 494 residues: MVLCFQDPDNIYSPKKTKKDDGERVITKQKSFLGLSILDISNPSSTTLSEDLSISLAGSDLHVFTQAELRVITQSFSSSNFLGEGGFGPVHKGFIDDKLRPGLKAQPVAVKLLDLDGLQGHREFMTEVMCLGKLKHPNLVKLIGYCCEEAHRLLVYEFMPRGSLESQLFRRCSLPLPWTTRLNIAYEAAKGLQFLHEAEKPIIYRDFKASNILLDSDYTAKLSDFGLAKDGPQGDDTHVSTRVMGTQGYAAPEYIMTGHLTAKSDVYSFGVVLLELLTGRKSVDIARSSRKETLVEWARPMLNDARKLGRIMDPRLEDQYSETGARKAATLAYQCLRYRPKTRPDISTVVSVLQDIKDYKDDIPIGIFTYTVPTKPRREVKETSLQNFDKPRRETKVTSLQNFDKTRREVKDTSLQNFDKTRREVKETSLQNFDKTRREVKETSLQNFDKPRNVSTTDNHQKFRSPAHTARNHRITLRNGYNSPMRNEAGGERY.

Cysteine 4 is lipidated: S-palmitoyl cysteine. Threonine 65 carries the phosphothreonine modification. The Protein kinase domain occupies 76 to 356; sequence FSSSNFLGEG…STVVSVLQDI (281 aa). ATP-binding positions include 82-90 and lysine 111; that span reads LGEGGFGPV. Tyrosine 156 is subject to Phosphotyrosine. Catalysis depends on aspartate 206, which acts as the Proton acceptor. Serine 210 bears the Phosphoserine mark. Serine 240 is modified (phosphoserine; by autocatalysis). Phosphothreonine is present on residues threonine 241 and threonine 246. Tyrosine 254 carries the post-translational modification Phosphotyrosine. Serine 321 is modified (phosphoserine; by autocatalysis). 2 positions are modified to phosphothreonine; by autocatalysis: threonine 323 and threonine 383. Serine 384 is subject to Phosphoserine; by autocatalysis. Phosphothreonine; by autocatalysis occurs at positions 395, 398, 406, 413, 421, and 428. Serine 429 is modified (phosphoserine; by autocatalysis). The interval 434–471 is disordered; the sequence is DKTRREVKETSLQNFDKPRNVSTTDNHQKFRSPAHTAR. Residue threonine 443 is modified to Phosphothreonine; by autocatalysis. The segment covering 443-458 has biased composition (polar residues); the sequence is TSLQNFDKPRNVSTTD. A phosphoserine; by autocatalysis mark is found at serine 444 and serine 455. Phosphothreonine; by autocatalysis is present on threonine 456. Basic residues predominate over residues 462–471; the sequence is KFRSPAHTAR. At tyrosine 481 the chain carries Phosphotyrosine; by autocatalysis.

Belongs to the protein kinase superfamily. Ser/Thr protein kinase family. Interacts with RBHOD. Interaction is disrupted by flagellin-induced immune signaling.

It is found in the cell membrane. It catalyses the reaction L-seryl-[protein] + ATP = O-phospho-L-seryl-[protein] + ADP + H(+). The enzyme catalyses L-threonyl-[protein] + ATP = O-phospho-L-threonyl-[protein] + ADP + H(+). Involved in defense responses. Acts as a negative regulator of plant immune responses. The chain is Serine/threonine-protein kinase PBL13 from Arabidopsis thaliana (Mouse-ear cress).